Here is a 160-residue protein sequence, read N- to C-terminus: Ribosomal RNA large subunit methyltransferase H (160 aa).

Residues Leu76 and Gly108 each coordinate S-adenosyl-L-methionine.

Belongs to the RNA methyltransferase RlmH family. Homodimer.

The protein localises to the cytoplasm. The enzyme catalyses pseudouridine(1915) in 23S rRNA + S-adenosyl-L-methionine = N(3)-methylpseudouridine(1915) in 23S rRNA + S-adenosyl-L-homocysteine + H(+). Specifically methylates the pseudouridine at position 1915 (m3Psi1915) in 23S rRNA. In Rhodopseudomonas palustris (strain HaA2), this protein is Ribosomal RNA large subunit methyltransferase H.